Reading from the N-terminus, the 444-residue chain is Tubulin beta chain (444 aa).

Residues Gln-11, Glu-69, Ser-138, Gly-142, Thr-143, Gly-144, Asn-204, and Asn-226 each coordinate GTP. Position 69 (Glu-69) interacts with Mg(2+).

It belongs to the tubulin family. As to quaternary structure, dimer of alpha and beta chains. A typical microtubule is a hollow water-filled tube with an outer diameter of 25 nm and an inner diameter of 15 nM. Alpha-beta heterodimers associate head-to-tail to form protofilaments running lengthwise along the microtubule wall with the beta-tubulin subunit facing the microtubule plus end conferring a structural polarity. Microtubules usually have 13 protofilaments but different protofilament numbers can be found in some organisms and specialized cells. The cofactor is Mg(2+).

The protein resides in the cytoplasm. Its subcellular location is the cytoskeleton. Functionally, tubulin is the major constituent of microtubules, a cylinder consisting of laterally associated linear protofilaments composed of alpha- and beta-tubulin heterodimers. Microtubules grow by the addition of GTP-tubulin dimers to the microtubule end, where a stabilizing cap forms. Below the cap, tubulin dimers are in GDP-bound state, owing to GTPase activity of alpha-tubulin. This chain is Tubulin beta chain, found in Trichuris trichiura (Whipworm).